Here is a 125-residue protein sequence, read N- to C-terminus: Oxytocin-neurophysin 1 (125 aa).

A signal peptide spans 1–19 (MACPSLACCLLGLLALTSA). The cysteines at positions 20 and 25 are disulfide-linked. A Glycine amide modification is found at glycine 28. 7 cysteine pairs are disulfide-bonded: cysteine 41-cysteine 85, cysteine 44-cysteine 58, cysteine 52-cysteine 75, cysteine 59-cysteine 65, cysteine 92-cysteine 104, cysteine 98-cysteine 116, and cysteine 105-cysteine 110.

The protein belongs to the vasopressin/oxytocin family. Interacts with oxytocin receptor (Ki=1.5 nM). Interacts with vasopressin V1aR/AVPR1A (Ki=37 nM), V1bR/AVPR1B (Ki=222 nM), and V2R/AVPR2 receptors (Ki=823 nM).

Functionally, neurophysin 1 specifically binds oxytocin. In terms of biological role, oxytocin causes contraction of the smooth muscle of the uterus and of the mammary gland. Acts by binding to oxytocin receptor (OXTR). The sequence is that of Oxytocin-neurophysin 1 (Oxt) from Rattus norvegicus (Rat).